Consider the following 260-residue polypeptide: Hemin import ATP-binding protein HmuV (260 aa).

Residues 6 to 242 enclose the ABC transporter domain; it reads LHADNLHYRA…VQLRACYQAD (237 aa). 38-45 is a binding site for ATP; the sequence is GPNGAGKS.

It belongs to the ABC transporter superfamily. Heme (hemin) importer (TC 3.A.1.14.5) family. In terms of assembly, the complex is composed of two ATP-binding proteins (HmuV), two transmembrane proteins (HmuU) and a solute-binding protein (HmuT).

It is found in the cell inner membrane. Functionally, part of the ABC transporter complex HmuTUV involved in hemin import. Responsible for energy coupling to the transport system. This is Hemin import ATP-binding protein HmuV from Sodalis glossinidius (strain morsitans).